The primary structure comprises 180 residues: Cytidylate kinase (180 aa).

An ATP-binding site is contributed by 7-15 (GPPGSGTTT).

It belongs to the cytidylate kinase family. Type 2 subfamily.

It localises to the cytoplasm. It carries out the reaction CMP + ATP = CDP + ADP. The enzyme catalyses dCMP + ATP = dCDP + ADP. The protein is Cytidylate kinase (cmk) of Archaeoglobus fulgidus (strain ATCC 49558 / DSM 4304 / JCM 9628 / NBRC 100126 / VC-16).